The primary structure comprises 331 residues: Serpentine receptor class alpha-9 (331 aa).

Transmembrane regions (helical) follow at residues 26-46 (IDLL…QLVL), 58-78 (LILE…IEAI), 104-124 (YLKV…GLMI), 142-162 (IIGF…GKLF), 189-209 (YFTV…LLKI), 238-258 (VCFL…GVGA), and 275-295 (LCVV…LLLI).

It belongs to the nematode receptor-like protein sra family.

The protein resides in the membrane. In Caenorhabditis elegans, this protein is Serpentine receptor class alpha-9 (sra-9).